Consider the following 347-residue polypeptide: Anthranilate phosphoribosyltransferase (347 aa).

5-phospho-alpha-D-ribose 1-diphosphate-binding positions include G88, 91–92 (GD), T96, 98–101 (NIST), 116–124 (KHGNRSVSS), and S128. Anthranilate is bound at residue G88. A Mg(2+)-binding site is contributed by S100. Anthranilate is bound at residue N119. R174 contributes to the anthranilate binding site. D232 and E233 together coordinate Mg(2+).

Belongs to the anthranilate phosphoribosyltransferase family. As to quaternary structure, homodimer. Mg(2+) serves as cofactor.

The enzyme catalyses N-(5-phospho-beta-D-ribosyl)anthranilate + diphosphate = 5-phospho-alpha-D-ribose 1-diphosphate + anthranilate. Its pathway is amino-acid biosynthesis; L-tryptophan biosynthesis; L-tryptophan from chorismate: step 2/5. Catalyzes the transfer of the phosphoribosyl group of 5-phosphorylribose-1-pyrophosphate (PRPP) to anthranilate to yield N-(5'-phosphoribosyl)-anthranilate (PRA). This chain is Anthranilate phosphoribosyltransferase, found in Shewanella sp. (strain MR-7).